Here is a 230-residue protein sequence, read N- to C-terminus: Prepilin leader peptidase/N-methyltransferase (230 aa).

Helical transmembrane passes span 1–21 (MIYF…WFYL), 60–80 (GHIL…QIAF), 84–104 (IFTV…YLDW), 114–134 (CLWL…LLTL), 140–160 (SAAS…FYYG), 181–201 (LETL…FSLI), and 208–228 (FLPF…VKYY).

Belongs to the peptidase A24 family.

The protein resides in the cell inner membrane. The catalysed reaction is Typically cleaves a -Gly-|-Phe- bond to release an N-terminal, basic peptide of 5-8 residues from type IV prepilin, and then N-methylates the new N-terminal amino group, the methyl donor being S-adenosyl-L-methionine.. In terms of biological role, plays a role in type II pseudopili formation by proteolytically removing the leader sequence from substrate proteins and subsequently monomethylating the alpha-amino group of the newly exposed N-terminal phenylalanine. Substrates include proteins required for biogenesis of the type II general secretory apparatus. This chain is Prepilin leader peptidase/N-methyltransferase (hofD), found in Haemophilus influenzae (strain ATCC 51907 / DSM 11121 / KW20 / Rd).